We begin with the raw amino-acid sequence, 481 residues long: ATP synthase subunit beta (481 aa).

Position 154–161 (154–161 (GGAGVGKT)) interacts with ATP.

It belongs to the ATPase alpha/beta chains family. In terms of assembly, F-type ATPases have 2 components, CF(1) - the catalytic core - and CF(0) - the membrane proton channel. CF(1) has five subunits: alpha(3), beta(3), gamma(1), delta(1), epsilon(1). CF(0) has three main subunits: a(1), b(2) and c(9-12). The alpha and beta chains form an alternating ring which encloses part of the gamma chain. CF(1) is attached to CF(0) by a central stalk formed by the gamma and epsilon chains, while a peripheral stalk is formed by the delta and b chains.

Its subcellular location is the cell inner membrane. It catalyses the reaction ATP + H2O + 4 H(+)(in) = ADP + phosphate + 5 H(+)(out). Functionally, produces ATP from ADP in the presence of a proton gradient across the membrane. The catalytic sites are hosted primarily by the beta subunits. The polypeptide is ATP synthase subunit beta (Novosphingobium aromaticivorans (strain ATCC 700278 / DSM 12444 / CCUG 56034 / CIP 105152 / NBRC 16084 / F199)).